A 473-amino-acid polypeptide reads, in one-letter code: Ribulose bisphosphate carboxylase large chain (473 aa).

Asn-116 and Thr-166 together coordinate substrate. The Proton acceptor role is filled by Lys-168. Lys-170 lines the substrate pocket. Residues Lys-194, Asp-196, and Glu-197 each coordinate Mg(2+). N6-carboxylysine is present on Lys-194. His-287 acts as the Proton acceptor in catalysis. The substrate site is built by Arg-288, His-320, and Ser-372.

The protein belongs to the RuBisCO large chain family. Type I subfamily. As to quaternary structure, heterohexadecamer of 8 large chains and 8 small chains. The cofactor is Mg(2+).

It catalyses the reaction 2 (2R)-3-phosphoglycerate + 2 H(+) = D-ribulose 1,5-bisphosphate + CO2 + H2O. The catalysed reaction is D-ribulose 1,5-bisphosphate + O2 = 2-phosphoglycolate + (2R)-3-phosphoglycerate + 2 H(+). RuBisCO catalyzes two reactions: the carboxylation of D-ribulose 1,5-bisphosphate, the primary event in carbon dioxide fixation, as well as the oxidative fragmentation of the pentose substrate. Both reactions occur simultaneously and in competition at the same active site. This is Ribulose bisphosphate carboxylase large chain from Rhodobacter capsulatus (strain ATCC BAA-309 / NBRC 16581 / SB1003).